Reading from the N-terminus, the 110-residue chain is MKFVLLFGVLLVTLFSYSSAEMLDDFDQADEDELLSLIEKEEARKDCIPKHHECTSNKHGCCRGHLFKYKCQCTTVVTQSGEETERCFCGTPPHHKAAELVVGFGKKIFG.

Positions 1 to 20 (MKFVLLFGVLLVTLFSYSSA) are cleaved as a signal peptide. Positions 21 to 44 (EMLDDFDQADEDELLSLIEKEEAR) are excised as a propeptide. Disulfide bonds link C47/C62, C54/C71, C61/C89, and C73/C87.

Belongs to the neurotoxin 19 (CSTX) family. 03 subfamily. As to expression, expressed by the venom gland.

The protein localises to the secreted. This chain is U1-lycotoxin-Ls1ii, found in Lycosa singoriensis (Wolf spider).